Here is a 351-residue protein sequence, read N- to C-terminus: Dihydroorotate dehydrogenase (quinone) (351 aa).

Residues 67-71 (AGFDK) and Thr91 contribute to the FMN site. Position 71 (Lys71) interacts with substrate. Residue 116–120 (NAMGF) participates in substrate binding. FMN-binding residues include Asn145 and Asn178. Asn178 contributes to the substrate binding site. The active-site Nucleophile is the Ser181. Asn183 is a substrate binding site. The FMN site is built by Lys214 and Thr242. 243–244 (NT) contacts substrate. FMN is bound by residues Gly262, Gly291, and 312–313 (YS).

Belongs to the dihydroorotate dehydrogenase family. Type 2 subfamily. In terms of assembly, monomer. FMN is required as a cofactor.

The protein localises to the cell membrane. The catalysed reaction is (S)-dihydroorotate + a quinone = orotate + a quinol. The protein operates within pyrimidine metabolism; UMP biosynthesis via de novo pathway; orotate from (S)-dihydroorotate (quinone route): step 1/1. Catalyzes the conversion of dihydroorotate to orotate with quinone as electron acceptor. This is Dihydroorotate dehydrogenase (quinone) (pyrD) from Helicobacter pylori (strain ATCC 700392 / 26695) (Campylobacter pylori).